The chain runs to 111 residues: uncharacterized protein (111 aa).

The protein resides in the cytoplasm. The protein localises to the nucleus. This is an uncharacterized protein from Schizosaccharomyces pombe (strain 972 / ATCC 24843) (Fission yeast).